An 852-amino-acid chain; its full sequence is Polyphosphate kinase (852 aa).

2 disordered regions span residues 1–36 and 58–82; these read MATG…DRPI and SHDP…SRRK. Residues 20-36 show a composition bias toward basic and acidic residues; that stretch reads VARDHPGCGPHRLDRPI. Residues 58–67 show a composition bias toward polar residues; that stretch reads SHDPAPSQSV. N131 serves as a coordination point for ATP. Residues 251-303 are disordered; sequence GDEIGPQRTPPPSDSLDNRVPSNLKRNSDTANQQPTPAENISAPEDGAEQTEP. An insert region spans residues 258–303; sequence RTPPPSDSLDNRVPSNLKRNSDTANQQPTPAENISAPEDGAEQTEP. Residues 270–289 are compositionally biased toward polar residues; that stretch reads VPSNLKRNSDTANQQPTPAE. Mg(2+)-binding residues include R524 and R554. Catalysis depends on H584, which acts as the Phosphohistidine intermediate. Residues Y617, R713, and H741 each contribute to the ATP site.

Belongs to the polyphosphate kinase 1 (PPK1) family. Mg(2+) serves as cofactor. Post-translationally, an intermediate of this reaction is the autophosphorylated ppk in which a phosphate is covalently linked to a histidine residue through a N-P bond.

The enzyme catalyses [phosphate](n) + ATP = [phosphate](n+1) + ADP. Catalyzes the reversible transfer of the terminal phosphate of ATP to form a long-chain polyphosphate (polyP). The chain is Polyphosphate kinase from Rhodopirellula baltica (strain DSM 10527 / NCIMB 13988 / SH1).